Consider the following 238-residue polypeptide: EKC/KEOPS complex subunit SPAP27G11.07c (238 aa).

The Protein kinase domain occupies 20-238 (EKKLTVVKQG…MRGRKRTMIG (219 aa)). ATP contacts are provided by residues 26–34 (VKQGAEAIT) and Lys-48. Asp-148 functions as the Proton acceptor in the catalytic mechanism.

It belongs to the protein kinase superfamily. BUD32 family. In terms of assembly, component of the EKC/KEOPS complex composed of at least SPAP27G11.07c/BUD32, cgi121, gon7, pgp2 and SPAC4H3.13/PCC1; the whole complex dimerizes.

Its subcellular location is the cytoplasm. The protein localises to the nucleus. The protein resides in the chromosome. It localises to the telomere. The enzyme catalyses L-seryl-[protein] + ATP = O-phospho-L-seryl-[protein] + ADP + H(+). It carries out the reaction L-threonyl-[protein] + ATP = O-phospho-L-threonyl-[protein] + ADP + H(+). Its function is as follows. Component of the EKC/KEOPS complex that is required for the formation of a threonylcarbamoyl group on adenosine at position 37 (t(6)A37) in tRNAs that read codons beginning with adenine. The complex is probably involved in the transfer of the threonylcarbamoyl moiety of threonylcarbamoyl-AMP (TC-AMP) to the N6 group of A37. BUD32 has ATPase activity in the context of the EKC/KEOPS complex and likely plays a supporting role to the catalytic subunit KAE1. The EKC/KEOPS complex also promotes both telomere uncapping and telomere elongation. The complex is required for efficient recruitment of transcriptional coactivators. The sequence is that of EKC/KEOPS complex subunit SPAP27G11.07c from Schizosaccharomyces pombe (strain 972 / ATCC 24843) (Fission yeast).